Consider the following 199-residue polypeptide: uncharacterized protein (199 aa).

Residues 71–104 (RANATNKLTVIAEQIQHLQEQARKVLEDARRDAD) are a coiled coil.

This is an uncharacterized protein from Mus musculus (Mouse).